The chain runs to 368 residues: F-box/kelch-repeat protein At5g51250 (368 aa).

The F-box domain maps to 1–44; the sequence is MSSLPDDLLLSIFARISRLYYPTLSLVSKSFRSLLASPDLYKAR. Kelch repeat units follow at residues 116 to 163, 165 to 218, and 260 to 304; these read DIYN…VLDR, IYVA…CIDG, and LFYI…YGGK.

This is F-box/kelch-repeat protein At5g51250 from Arabidopsis thaliana (Mouse-ear cress).